The primary structure comprises 62 residues: Photosystem II reaction center protein Z (62 aa).

Helical transmembrane passes span 8–28 (AVFALIATSSILLISVPVVFA) and 41–61 (FSGTSLWIALVFLVGILNSLI).

This sequence belongs to the PsbZ family. PSII is composed of 1 copy each of membrane proteins PsbA, PsbB, PsbC, PsbD, PsbE, PsbF, PsbH, PsbI, PsbJ, PsbK, PsbL, PsbM, PsbT, PsbY, PsbZ, Psb30/Ycf12, at least 3 peripheral proteins of the oxygen-evolving complex and a large number of cofactors. It forms dimeric complexes.

Its subcellular location is the plastid. It localises to the chloroplast thylakoid membrane. Its function is as follows. May control the interaction of photosystem II (PSII) cores with the light-harvesting antenna, regulates electron flow through the 2 photosystem reaction centers. PSII is a light-driven water plastoquinone oxidoreductase, using light energy to abstract electrons from H(2)O, generating a proton gradient subsequently used for ATP formation. In Lotus japonicus (Lotus corniculatus var. japonicus), this protein is Photosystem II reaction center protein Z.